The primary structure comprises 177 residues: Nucleoside triphosphate/diphosphate phosphatase (177 aa).

R23 (proton donor) is an active-site residue. N87, D103, D105, D107, D120, and E123 together coordinate Mg(2+).

It belongs to the Ntdp family. It depends on Mg(2+) as a cofactor.

It catalyses the reaction a ribonucleoside 5'-triphosphate + H2O = a ribonucleoside 5'-diphosphate + phosphate + H(+). It carries out the reaction a ribonucleoside 5'-diphosphate + H2O = a ribonucleoside 5'-phosphate + phosphate + H(+). Its function is as follows. Has nucleoside phosphatase activity towards nucleoside triphosphates and nucleoside diphosphates. The sequence is that of Nucleoside triphosphate/diphosphate phosphatase from Streptococcus pyogenes serotype M3 (strain ATCC BAA-595 / MGAS315).